The primary structure comprises 250 residues: 3-deoxy-manno-octulosonate cytidylyltransferase (250 aa).

It belongs to the KdsB family.

Its subcellular location is the cytoplasm. It catalyses the reaction 3-deoxy-alpha-D-manno-oct-2-ulosonate + CTP = CMP-3-deoxy-beta-D-manno-octulosonate + diphosphate. The protein operates within nucleotide-sugar biosynthesis; CMP-3-deoxy-D-manno-octulosonate biosynthesis; CMP-3-deoxy-D-manno-octulosonate from 3-deoxy-D-manno-octulosonate and CTP: step 1/1. It participates in bacterial outer membrane biogenesis; lipopolysaccharide biosynthesis. In terms of biological role, activates KDO (a required 8-carbon sugar) for incorporation into bacterial lipopolysaccharide in Gram-negative bacteria. The sequence is that of 3-deoxy-manno-octulosonate cytidylyltransferase from Sinorhizobium medicae (strain WSM419) (Ensifer medicae).